The sequence spans 350 residues: S-adenosylmethionine:tRNA ribosyltransferase-isomerase (350 aa).

It belongs to the QueA family. In terms of assembly, monomer.

The protein resides in the cytoplasm. The catalysed reaction is 7-aminomethyl-7-carbaguanosine(34) in tRNA + S-adenosyl-L-methionine = epoxyqueuosine(34) in tRNA + adenine + L-methionine + 2 H(+). It participates in tRNA modification; tRNA-queuosine biosynthesis. Transfers and isomerizes the ribose moiety from AdoMet to the 7-aminomethyl group of 7-deazaguanine (preQ1-tRNA) to give epoxyqueuosine (oQ-tRNA). The chain is S-adenosylmethionine:tRNA ribosyltransferase-isomerase from Bacillus cereus (strain Q1).